The following is a 310-amino-acid chain: N-acetyl-gamma-glutamyl-phosphate reductase (310 aa).

The active site involves Cys116.

Belongs to the NAGSA dehydrogenase family. Type 2 subfamily.

The protein resides in the cytoplasm. The enzyme catalyses N-acetyl-L-glutamate 5-semialdehyde + phosphate + NADP(+) = N-acetyl-L-glutamyl 5-phosphate + NADPH + H(+). Its pathway is amino-acid biosynthesis; L-arginine biosynthesis; N(2)-acetyl-L-ornithine from L-glutamate: step 3/4. Functionally, catalyzes the NADPH-dependent reduction of N-acetyl-5-glutamyl phosphate to yield N-acetyl-L-glutamate 5-semialdehyde. This chain is N-acetyl-gamma-glutamyl-phosphate reductase, found in Chelativorans sp. (strain BNC1).